The following is a 183-amino-acid chain: Inner membrane protein YgjV (183 aa).

Residues 1–2 (MT) lie on the Periplasmic side of the membrane. A helical transmembrane segment spans residues 3 to 23 (AYWLAQGVGVIAFLIGITTFF). The Cytoplasmic portion of the chain corresponds to 24 to 38 (NRDERRFKKQLSVYS). The helical transmembrane segment at 39–59 (AVIGVHFFLLGTYPAGASAIL) threads the bilayer. At 60–71 (NAIRTLITLRTR) the chain is on the periplasmic side. Transmembrane regions (helical) follow at residues 72–92 (SLWV…AKFH) and 93–113 (HPVE…LFCC). Residues 114–133 (KGLTMRCVMWFSTCCWVIHN) are Periplasmic-facing. The chain crosses the membrane as a helical span at residues 134–154 (FWAGSIGGTMIEGSFLLMNGL). At 155–183 (NIIRFWRMQKRGIDPFKVEKTPSAVDERG) the chain is on the cytoplasmic side.

The protein resides in the cell inner membrane. This Escherichia coli (strain K12) protein is Inner membrane protein YgjV (ygjV).